Here is a 303-residue protein sequence, read N- to C-terminus: MKVIFMGTPEFAVPALKKLITHHEVKAVFTQQPKAKGRGLNLAKSPIHQLAFEHQIPVYTPSTLRNDEIINLINKVNADIIVVIAYGFIVPKAILEAKKYGCLNIHPSDLPRHRGAAPLQRTIIEGDRKSSVCIMRMDTGLDTGDILMKEDFDLEERITLEELHNKCANLGAELLIKTLANIDNIVPITQPSDGVTYAHKLTKEEGKINWHESAYKIDCKIRGMNPWPGAYFSYNDKIIKILEAEYLNADHHFTSGTVISDKLEIACGSGILRVKKLQQESKKALNIEEFLRGTNILKDTVLK.

108 to 111 contributes to the (6S)-5,6,7,8-tetrahydrofolate binding site; sequence SDLP.

It belongs to the Fmt family.

The catalysed reaction is L-methionyl-tRNA(fMet) + (6R)-10-formyltetrahydrofolate = N-formyl-L-methionyl-tRNA(fMet) + (6S)-5,6,7,8-tetrahydrofolate + H(+). Functionally, attaches a formyl group to the free amino group of methionyl-tRNA(fMet). The formyl group appears to play a dual role in the initiator identity of N-formylmethionyl-tRNA by promoting its recognition by IF2 and preventing the misappropriation of this tRNA by the elongation apparatus. The sequence is that of Methionyl-tRNA formyltransferase from Rickettsia africae (strain ESF-5).